Consider the following 95-residue polypeptide: Aspartyl/glutamyl-tRNA(Asn/Gln) amidotransferase subunit C (95 aa).

The protein belongs to the GatC family. As to quaternary structure, heterotrimer of A, B and C subunits.

The catalysed reaction is L-glutamyl-tRNA(Gln) + L-glutamine + ATP + H2O = L-glutaminyl-tRNA(Gln) + L-glutamate + ADP + phosphate + H(+). It carries out the reaction L-aspartyl-tRNA(Asn) + L-glutamine + ATP + H2O = L-asparaginyl-tRNA(Asn) + L-glutamate + ADP + phosphate + 2 H(+). Functionally, allows the formation of correctly charged Asn-tRNA(Asn) or Gln-tRNA(Gln) through the transamidation of misacylated Asp-tRNA(Asn) or Glu-tRNA(Gln) in organisms which lack either or both of asparaginyl-tRNA or glutaminyl-tRNA synthetases. The reaction takes place in the presence of glutamine and ATP through an activated phospho-Asp-tRNA(Asn) or phospho-Glu-tRNA(Gln). This Campylobacter lari (strain RM2100 / D67 / ATCC BAA-1060) protein is Aspartyl/glutamyl-tRNA(Asn/Gln) amidotransferase subunit C.